Reading from the N-terminus, the 64-residue chain is Small ribosomal subunit protein bS21 (64 aa).

A disordered region spans residues 37 to 64; that stretch reads EKPSVKRKRKEKEAQRRLRKKMRMMKKA. The span at 53–64 shows a compositional bias: basic residues; sequence RLRKKMRMMKKA.

It belongs to the bacterial ribosomal protein bS21 family.

This Syntrophotalea carbinolica (strain DSM 2380 / NBRC 103641 / GraBd1) (Pelobacter carbinolicus) protein is Small ribosomal subunit protein bS21.